The chain runs to 568 residues: Natural resistance-associated macrophage protein 2 (568 aa).

Basic and acidic residues predominate over residues methionine 1–aspartate 20. The disordered stretch occupies residues methionine 1 to glutamate 45. The Cytoplasmic segment spans residues methionine 1 to lysine 69. The span at alanine 30–threonine 40 shows a compositional bias: polar residues. The chain crosses the membrane as a helical span at residues leucine 70–isoleucine 90. Topologically, residues glutamate 91–glutamine 95 are extracellular. The chain crosses the membrane as a helical span at residues serine 96–leucine 117. Residues leucine 118–glutamate 154 lie on the Cytoplasmic side of the membrane. A helical transmembrane segment spans residues leucine 155–leucine 175. Residues serine 176–arginine 179 are Extracellular-facing. Residues valine 180–phenylalanine 194 form a helical membrane-spanning segment. Residues valine 195–glutamate 208 are Cytoplasmic-facing. The helical transmembrane segment at alanine 209 to valine 229 threads the bilayer. At lysine 230 to glutamine 255 the chain is on the extracellular side. Residues alanine 256–valine 276 form a helical membrane-spanning segment. Over lysine 277–cysteine 301 the chain is Cytoplasmic. Residues isoleucine 302–phenylalanine 322 form a helical membrane-spanning segment. The Extracellular segment spans residues phenylalanine 323–glycine 360. 2 N-linked (GlcNAc...) asparagine glycosylation sites follow: asparagine 336 and asparagine 349. A helical membrane pass occupies residues valine 361–alanine 381. The Cytoplasmic portion of the chain corresponds to alanine 382–arginine 408. A helical transmembrane segment spans residues phenylalanine 409–phenylalanine 429. Residues glutamine 430–aspartate 440 lie on the Extracellular side of the membrane. A helical membrane pass occupies residues phenylalanine 441–threonine 461. The Cytoplasmic portion of the chain corresponds to serine 462–isoleucine 482. A helical transmembrane segment spans residues leucine 483–glycine 503. Over histidine 504 to alanine 506 the chain is Extracellular. A helical membrane pass occupies residues leucine 507 to tryptophan 527. The Cytoplasmic segment spans residues glutamine 528 to arginine 568. A required for early endosome targeting region spans residues tyrosine 555–threonine 559. Phosphoserine is present on residues leucine 556, serine 564, and serine 567.

Belongs to the NRAMP family. As to quaternary structure, forms a complex with NDFIP1 and NEDD4L, in cortical neurons, in response to iron and cobalt exposure; this interaction leads to SLC11A2 ubiquitination by NEDD4L and proteasome-dependent degradation. Interacts with NDFIP1, NDFIP2 and WWP2; this interaction leads to SLC11A2 ubiquitination by WWP2 and subsequent proteasome-dependent degradation. Interacts with COX2 and TOM6 at the outer mitochondrion membrane. Interacts with ARRDC1; this interaction regulates the incorporation of SLC11A2 into extracellular vesicles through an ubiquitination-dependent mechanism. Interacts with ARRDC4; controls the incorporation of SLC11A2 into extracellular vesicles through an ubiquitination-dependent mechanism. Post-translationally, ubiquitinated by WWP2. N-glycosylated. As to expression, ubiquitous. In terms of tissue distribution, expressed in proximal intestine, kidney and brain.

The protein localises to the golgi apparatus. Its subcellular location is the trans-Golgi network membrane. It localises to the early endosome membrane. The protein resides in the recycling endosome membrane. It is found in the late endosome membrane. The protein localises to the lysosome membrane. Its subcellular location is the apical cell membrane. It localises to the mitochondrion outer membrane. The protein resides in the extracellular vesicle membrane. It catalyses the reaction Fe(2+)(in) + H(+)(in) = Fe(2+)(out) + H(+)(out). The enzyme catalyses Cd(2+)(out) + H(+)(out) = Cd(2+)(in) + H(+)(in). The catalysed reaction is Co(2+)(out) + H(+)(out) = Co(2+)(in) + H(+)(in). It carries out the reaction Mn(2+)(in) + H(+)(in) = Mn(2+)(out) + H(+)(out). It catalyses the reaction Zn(2+)(out) + H(+)(out) = Zn(2+)(in) + H(+)(in). The enzyme catalyses Ni(2+)(out) + H(+)(out) = Ni(2+)(in) + H(+)(in). The catalysed reaction is H(+)(in) = H(+)(out). It carries out the reaction Fe(2+)(in) = Fe(2+)(out). Inhibited by 2-(3-carbamimidoylsulfanylmethyl-benzyl)-isothiourea. In terms of biological role, proton-coupled metal ion symporter operating with a proton to metal ion stoichiometry of 1:1. Selectively transports various divalent metal cations, in decreasing affinity: Cd(2+) &gt; Fe(2+) &gt; Co(2+), Mn(2+) &gt;&gt; Zn(2+), Ni(2+), VO(2+). Essential for maintenance of iron homeostasis by modulating intestinal absorption of dietary Fe(2+) and TF-associated endosomal Fe(2+) transport in erythroid precursors and other cells. Enables Fe(2+) and Mn(2+) ion entry into mitochondria, and is thus expected to promote mitochondrial heme synthesis, iron-sulfur cluster biogenesis and antioxidant defense. Can mediate uncoupled fluxes of either protons or metal ions. This chain is Natural resistance-associated macrophage protein 2 (Slc11a2), found in Rattus norvegicus (Rat).